The following is a 584-amino-acid chain: Probable DNA ligase (584 aa).

Residue Glu-248 participates in ATP binding. Lys-250 acts as the N6-AMP-lysine intermediate in catalysis. The ATP site is built by Arg-255, Arg-270, Glu-299, Phe-339, Arg-416, and Lys-422.

Belongs to the ATP-dependent DNA ligase family. The cofactor is Mg(2+).

The catalysed reaction is ATP + (deoxyribonucleotide)n-3'-hydroxyl + 5'-phospho-(deoxyribonucleotide)m = (deoxyribonucleotide)n+m + AMP + diphosphate.. Its function is as follows. DNA ligase that seals nicks in double-stranded DNA during DNA replication, DNA recombination and DNA repair. This Aquifex aeolicus (strain VF5) protein is Probable DNA ligase.